A 598-amino-acid polypeptide reads, in one-letter code: UvrABC system protein C (598 aa).

The 78-residue stretch at D14 to I91 folds into the GIY-YIG domain. A UVR domain is found at D196–M231.

This sequence belongs to the UvrC family. In terms of assembly, interacts with UvrB in an incision complex.

It is found in the cytoplasm. The UvrABC repair system catalyzes the recognition and processing of DNA lesions. UvrC both incises the 5' and 3' sides of the lesion. The N-terminal half is responsible for the 3' incision and the C-terminal half is responsible for the 5' incision. The chain is UvrABC system protein C from Streptococcus pyogenes serotype M3 (strain ATCC BAA-595 / MGAS315).